The chain runs to 84 residues: MAHKKAGGSTRNGRDSNPKYLGVKRYGGEFVKAGTIILRQRGTKTHPGVNVGCGKDHTLFALKDGTVKFHVGGALNRKFVSIDE.

Residues 1-20 (MAHKKAGGSTRNGRDSNPKY) are disordered.

This sequence belongs to the bacterial ribosomal protein bL27 family.

The chain is Large ribosomal subunit protein bL27 from Francisella philomiragia subsp. philomiragia (strain ATCC 25017 / CCUG 19701 / FSC 153 / O#319-036).